Reading from the N-terminus, the 70-residue chain is Putative peptide YY-3 (70 aa).

Positions 1–23 are cleaved as a signal peptide; sequence MVSVCRPWPAVAIALLALLVCLG.

The protein belongs to the NPY family.

It localises to the secreted. The protein is Putative peptide YY-3 (PYY3) of Homo sapiens (Human).